The sequence spans 417 residues: Squamosa promoter-binding-like protein 14 (417 aa).

Composition is skewed to gly residues over residues 1–26 (MEMA…GGGG) and 51–60 (AGGGGTGSGS). 2 disordered regions span residues 1–32 (MEMA…EHRQ) and 51–102 (AGGG…PPPP). The span at 61–74 (GSASAAPPSSSSKA) shows a compositional bias: low complexity. Residues 75–84 (AGGGRGGGGK) show a composition bias toward gly residues. The segment at 101 to 178 (PPRCQVEGCG…AGHNERRRRP (78 aa)) adopts an SBP-type zinc-finger fold. Zn(2+) contacts are provided by cysteine 104, cysteine 109, cysteine 126, histidine 129, cysteine 145, cysteine 148, and histidine 152. Residues 161-177 (KRSCRRRLAGHNERRRR) carry the Bipartite nuclear localization signal motif. Serine 163 is modified (phosphoserine). Residue cysteine 164 coordinates Zn(2+). The interval 387–417 (LQGNGPAPAPRIDPGSGSTFDQTSNTMDWSL) is disordered. Residues 402 to 417 (SGSTFDQTSNTMDWSL) are compositionally biased toward polar residues.

In terms of assembly, interacts with PCF1 and PCF2. Interacts with IPI1. Interacts with D53. Interacts with SLR1. Interacts (via C-terminus) with SHI1. Phosphorylated at Ser-163 in response to infection by the fungal pathogen Magnaporthe oryzae. Post-translationally, ubiquitinated by IPI1, which leads to proteasomal degradation. Expressed in young panicles. Expressed in the shoot apex at both the vegetative and reproductive stages. Highly expressed in the promordia of primary and secondary branches. Highly expressed in young panicles.

The protein resides in the nucleus. Transcriptional activator that binds to the SBP-box DNA core binding motif 5'-GTAC-3'. Can target the TCP motif 5'-TGGGCC/T-3' through interaction with PCF1 and PCF2. Key regulator of the plant architecture that controls shoot branching and panicle development. Promotes panicle branching. Promotes high grain yield. Binds to the promoters of TB1 and DEP1. Suppresses rice tillering mainly through positive regulation of TB1. Regulates plant height and panicle length through positive regulation of DEP1. Repressed by D53 in strigolactone (SL) signaling. Acts with D53 to mediate the SL-regulated tiller development. Functions as a direct downstream component of D53 in regulating tiller number and SL-induced gene expression. Binds directly to the D53 promoter and plays a critical role in the negative feedback regulation of SL-induced D53 expression. Involved in defense response against pathogens. Phosphorylated at Ser-163 in response to infection by the fungal pathogen Magnaporthe oryzae. Phosphorylation reduces SPL14/IPA1 binding to the GTAC site in the DEP1 promoter and enhances binding to the TGGGCC site in the WRKY45 promoter. Binding to the promoter of the pathogen defense gene WRKY45 activates its expression, leading to enhanced disease resistance. Reduces gibberellin-mediated disease susceptibility by stabilizing SLR1. Possesses transactivation activity in yeast cells. The sequence is that of Squamosa promoter-binding-like protein 14 from Oryza sativa subsp. japonica (Rice).